The following is a 513-amino-acid chain: Lysine--tRNA ligase (513 aa).

The Mg(2+) site is built by Glu423 and Glu430.

The protein belongs to the class-II aminoacyl-tRNA synthetase family. As to quaternary structure, homodimer. It depends on Mg(2+) as a cofactor.

The protein resides in the cytoplasm. It carries out the reaction tRNA(Lys) + L-lysine + ATP = L-lysyl-tRNA(Lys) + AMP + diphosphate. This Anaeromyxobacter dehalogenans (strain 2CP-1 / ATCC BAA-258) protein is Lysine--tRNA ligase.